The sequence spans 738 residues: ATP-dependent RNA helicase rok1 (738 aa).

2 disordered regions span residues 1-112 (MDAF…DEEV) and 145-176 (VASE…EQKK). Over residues 17–29 (ATPSSAQSSTRLP) the composition is skewed to polar residues. A compositionally biased stretch (basic and acidic residues) spans 92–104 (SKEEKQEQERSGE). The Q motif signature appears at 190-218 (ELRSKYKISSRLAENIAEQGFTVPTEVQL). Residues 231–447 (KAGESVEPDL…KSTIKERKEA (217 aa)) form the Helicase ATP-binding domain. 244–251 (APTGSGKT) is a binding site for ATP. Positions 316–356 (VVEREDEDDDGDDSSSEDGDESSESEHEERPIAKKSKGKAP) are disordered. A compositionally biased stretch (acidic residues) spans 319-338 (REDEDDDGDDSSSEDGDESS). Residues 394-397 (DEAD) carry the DEAD box motif. Positions 487-655 (GLRQLLHPTA…SIQKWLLDAL (169 aa)) constitute a Helicase C-terminal domain. A disordered region spans residues 663–738 (KKELKKHGVK…GNESWDGLEN (76 aa)). The span at 697 to 706 (GFERRIENKK) shows a compositional bias: basic and acidic residues.

This sequence belongs to the DEAD box helicase family. DDX52/ROK1 subfamily. As to quaternary structure, interacts with the U3 snoRNA and is associated with the 90S and 40S pre-ribosomes.

The protein localises to the nucleus. The protein resides in the nucleolus. The catalysed reaction is ATP + H2O = ADP + phosphate + H(+). In terms of biological role, ATP-dependent RNA helicase involved in 40S ribosomal subunit biogenesis. Required for the processing and cleavage of 35S pre-rRNA at sites A0, A1, and A2, leading to mature 18S rRNA. This Aspergillus clavatus (strain ATCC 1007 / CBS 513.65 / DSM 816 / NCTC 3887 / NRRL 1 / QM 1276 / 107) protein is ATP-dependent RNA helicase rok1 (rok1).